Consider the following 278-residue polypeptide: Hydroxyethylthiazole kinase (278 aa).

Position 51 (methionine 51) interacts with substrate. ATP-binding residues include arginine 127 and serine 173. Glycine 201 contacts substrate.

It belongs to the Thz kinase family. The cofactor is Mg(2+).

The catalysed reaction is 5-(2-hydroxyethyl)-4-methylthiazole + ATP = 4-methyl-5-(2-phosphooxyethyl)-thiazole + ADP + H(+). It functions in the pathway cofactor biosynthesis; thiamine diphosphate biosynthesis; 4-methyl-5-(2-phosphoethyl)-thiazole from 5-(2-hydroxyethyl)-4-methylthiazole: step 1/1. Functionally, catalyzes the phosphorylation of the hydroxyl group of 4-methyl-5-beta-hydroxyethylthiazole (THZ). In Leptothrix cholodnii (strain ATCC 51168 / LMG 8142 / SP-6) (Leptothrix discophora (strain SP-6)), this protein is Hydroxyethylthiazole kinase.